A 579-amino-acid chain; its full sequence is MRLFLLLVGLTTVIADDLPPTCIRPVYCNSTLLHYVQMARLYPDSKTFVDFQMRKDENATLSAFQELLDRTNHNPTKEDLQEFVVDFFDETSELEEWKPDDHKENPPFLAKIRDQGFREFAKALNDIWPTLARRVKPSVLEKPEQSSLVPMTHGFIVPGGRFKEIYYWDAYWIIEGLLITDMTETAKGMIENLIELLYKFGHIPNGSRWYYQERSQPPLLAAMIKLYYEKTKDIEFIRKYISALEKELEYWLDTHLIAFNKDDRVYTLLRYYIPSAGPRPESYYEDYELAQKLDKNTDPNDIYADLKSAAESGWDFSTRWFISESGDNSGNLTNLNTKNVIPVDLNAIFAGALQITANFQAILKNPRRAAHWGYMAEQWRSSIEQALWDEEDGVWHDYDILNNKPRRYFYTSNLAPLWMNAVEKPFLAKHGARVLEYLHESQALEYPGGVPVSLVNSGEQWDFPNAWPPEVSIVVTAIQNIGSEESSKLAKELAQVWVRACKSGFTEKKQMFEKYDALNAGKYGGGGEYTVQDGFGWSNGVVLEFLDRYGAVLTSVDSVDASANNGQSNEESETDSKEK.

The signal sequence occupies residues 1-15 (MRLFLLLVGLTTVIA). Residues N29 and N58 are each glycosylated (N-linked (GlcNAc...) asparagine). Substrate-binding positions include R161, 168 to 169 (WD), N205, 214 to 216 (RSQ), 279 to 281 (RPE), and G313. N205 is a glycosylation site (N-linked (GlcNAc...) asparagine). The Proton donor/acceptor role is filled by D315. N-linked (GlcNAc...) asparagine glycosylation is present at N331. E513 serves as the catalytic Proton donor/acceptor. E528 is a substrate binding site. Over residues 560–569 (DASANNGQSN) the composition is skewed to polar residues. Residues 560-579 (DASANNGQSNEESETDSKEK) are disordered.

Belongs to the glycosyl hydrolase 37 family. As to expression, in midgut and Malpighian tubules.

Its subcellular location is the basolateral cell membrane. The enzyme catalyses alpha,alpha-trehalose + H2O = alpha-D-glucose + beta-D-glucose. Its function is as follows. Involved in uptake of hemolymph trehalose into epithelial cells in the midgut of feeding larvae. The sequence is that of Trehalase from Bombyx mori (Silk moth).